A 757-amino-acid chain; its full sequence is Xaa-Pro dipeptidyl-peptidase (757 aa).

Residues Ser-348, Asp-468, and His-498 each act as charge relay system in the active site.

The protein belongs to the peptidase S15 family. In terms of assembly, homodimer.

It is found in the cytoplasm. It carries out the reaction Hydrolyzes Xaa-Pro-|- bonds to release unblocked, N-terminal dipeptides from substrates including Ala-Pro-|-p-nitroanilide and (sequentially) Tyr-Pro-|-Phe-Pro-|-Gly-Pro-|-Ile.. Removes N-terminal dipeptides sequentially from polypeptides having unsubstituted N-termini provided that the penultimate residue is proline. The protein is Xaa-Pro dipeptidyl-peptidase of Streptococcus pneumoniae serotype 19F (strain G54).